The sequence spans 283 residues: 2-dehydro-3-deoxyphosphooctonate aldolase (283 aa).

Belongs to the KdsA family.

It localises to the cytoplasm. It carries out the reaction D-arabinose 5-phosphate + phosphoenolpyruvate + H2O = 3-deoxy-alpha-D-manno-2-octulosonate-8-phosphate + phosphate. The protein operates within carbohydrate biosynthesis; 3-deoxy-D-manno-octulosonate biosynthesis; 3-deoxy-D-manno-octulosonate from D-ribulose 5-phosphate: step 2/3. It participates in bacterial outer membrane biogenesis; lipopolysaccharide biosynthesis. The sequence is that of 2-dehydro-3-deoxyphosphooctonate aldolase from Vibrio parahaemolyticus serotype O3:K6 (strain RIMD 2210633).